Here is an 853-residue protein sequence, read N- to C-terminus: DNA mismatch repair protein MutS (853 aa).

Residue 614-621 participates in ATP binding; that stretch reads GPNMGGKS.

It belongs to the DNA mismatch repair MutS family.

Functionally, this protein is involved in the repair of mismatches in DNA. It is possible that it carries out the mismatch recognition step. This protein has a weak ATPase activity. In Shigella boydii serotype 18 (strain CDC 3083-94 / BS512), this protein is DNA mismatch repair protein MutS.